The sequence spans 412 residues: Peptidase T (412 aa).

His-78 serves as a coordination point for Zn(2+). Residue Asp-80 is part of the active site. A Zn(2+)-binding site is contributed by Asp-140. The Proton acceptor role is filled by Glu-173. 3 residues coordinate Zn(2+): Glu-174, Asp-196, and His-379.

The protein belongs to the peptidase M20B family. Requires Zn(2+) as cofactor.

The protein localises to the cytoplasm. The catalysed reaction is Release of the N-terminal residue from a tripeptide.. In terms of biological role, cleaves the N-terminal amino acid of tripeptides. The sequence is that of Peptidase T from Edwardsiella ictaluri (strain 93-146).